The sequence spans 513 residues: uncharacterized protein (513 aa).

A compositionally biased stretch (basic and acidic residues) spans 1–16 (MPREHDSKYHRERDMR). Residues 1-21 (MPREHDSKYHRERDMRSGLQE) are disordered.

This is an uncharacterized protein from Sinorhizobium fredii (strain NBRC 101917 / NGR234).